The primary structure comprises 335 residues: Methionine import ATP-binding protein MetN 1 (335 aa).

The region spanning 2 to 242 (IEFHNVHKTY…PQHATTRRFV (241 aa)) is the ABC transporter domain. 38 to 45 (GHSGAGKS) contributes to the ATP binding site.

The protein belongs to the ABC transporter superfamily. Methionine importer (TC 3.A.1.24) family. As to quaternary structure, the complex is composed of two ATP-binding proteins (MetN), two transmembrane proteins (MetI) and a solute-binding protein (MetQ).

The protein localises to the cell inner membrane. It carries out the reaction L-methionine(out) + ATP + H2O = L-methionine(in) + ADP + phosphate + H(+). The enzyme catalyses D-methionine(out) + ATP + H2O = D-methionine(in) + ADP + phosphate + H(+). Part of the ABC transporter complex MetNIQ involved in methionine import. Responsible for energy coupling to the transport system. The sequence is that of Methionine import ATP-binding protein MetN 1 from Pseudomonas syringae pv. syringae (strain B728a).